The sequence spans 374 residues: Actin-related protein 2/3 complex subunit 2B (374 aa).

The protein belongs to the ARPC2 family. As to quaternary structure, component of the Arp2/3 complex composed of ARP2, ARP3, ARPC1/p41-ARC, ARPC2/p34-ARC, ARPC3/p21-ARC, ARPC4/p20-ARC and ARPC5/p16-ARC. Expressed at low levels in all tissues with a relatively highest expression in inflorescences.

Its subcellular location is the cytoplasm. The protein resides in the cytoskeleton. It localises to the cell projection. In terms of biological role, functions as actin-binding component of the Arp2/3 complex which is involved in regulation of actin polymerization and together with an activating nucleation-promoting factor (NPF) mediates the formation of branched actin networks. Seems to contact the mother actin filament. Arp2/3 complex plays a critical role in the control of cell morphogenesis via the modulation of cell polarity development. The sequence is that of Actin-related protein 2/3 complex subunit 2B (ARPC2B) from Arabidopsis thaliana (Mouse-ear cress).